Consider the following 343-residue polypeptide: UDP-3-O-acylglucosamine N-acyltransferase (343 aa).

The active-site Proton acceptor is the His-239.

It belongs to the transferase hexapeptide repeat family. LpxD subfamily. Homotrimer.

The catalysed reaction is a UDP-3-O-[(3R)-3-hydroxyacyl]-alpha-D-glucosamine + a (3R)-hydroxyacyl-[ACP] = a UDP-2-N,3-O-bis[(3R)-3-hydroxyacyl]-alpha-D-glucosamine + holo-[ACP] + H(+). It participates in bacterial outer membrane biogenesis; LPS lipid A biosynthesis. In terms of biological role, catalyzes the N-acylation of UDP-3-O-acylglucosamine using 3-hydroxyacyl-ACP as the acyl donor. Is involved in the biosynthesis of lipid A, a phosphorylated glycolipid that anchors the lipopolysaccharide to the outer membrane of the cell. The polypeptide is UDP-3-O-acylglucosamine N-acyltransferase (Vibrio parahaemolyticus serotype O3:K6 (strain RIMD 2210633)).